The primary structure comprises 347 residues: Syntaxin-32 (347 aa).

At 1–325 (MSARHGQSSY…RYLNSISSNR (325 aa)) the chain is on the cytoplasmic side. 2 disordered regions span residues 172–191 (HESRRQLFSSNASKESTNPF) and 208–251 (PLPW…QQMV). Polar residues-rich tracts occupy residues 177–191 (QLFSSNASKESTNPF) and 213–222 (NGSSSSSSQL). Over residues 237–249 (QQSQQQQQQQQQQ) the composition is skewed to low complexity. The t-SNARE coiled-coil homology domain maps to 255–317 (DTYMQGRAEA…EGAQSQLARY (63 aa)). A helical; Anchor for type IV membrane protein membrane pass occupies residues 326-346 (WLMMKIFFVLIAFLMIFLFFV). A347 is a topological domain (vesicular).

This sequence belongs to the syntaxin family. As to quaternary structure, part of the t-SNARE complex.

Its subcellular location is the golgi apparatus. The protein resides in the cis-Golgi network membrane. Vesicle trafficking protein that functions in the secretory pathway. This chain is Syntaxin-32 (SYP32), found in Arabidopsis thaliana (Mouse-ear cress).